Here is a 1252-residue protein sequence, read N- to C-terminus: MAIIKRVVRSKAGQAPVKKGAKIKKASYDSSRKKEVGVSDLTLLSKISDESINDNLKKRFEHGIIYTYIGYVLISVNPFRDLGIYTDDTMKSYQGKNRLEAPPHVFAIAENMYYNLKSYNENQCVIISGESGAGKTEAAKRIMQYIAATSSTHSESISKIKDMVLATNPLLESFGCAKTLRNNNSSRHGKYLEIKFDAHFQPCAGHITNYLLEKQRVVGQIKNERNFHIFYQFTKGAPEEYRQLFGVQQPEQYIYTSASQCTAVENMDDVEEFNETLNAMRTIGLTKSEQDQIFRALAAILWIGNISFVENEAGNAEIRDKSVTTFVAYLLEVQEELLIKALIERIIETTHGAKRGSTYHSPLNIIQATAVRDALAKAIYNNLFEWIVERVNNSLQAFPGADKSIGILDIYGFEIFEHNSFEQICINYVNEKLQQIFIQLTLKSEQDTYKKEQIHWTPIEYFDNKIVCDLIEAKRPPGIFAAMNDAIATAHADSDAADQAFAQRLNLFTTNPHFELRQNKFVVKHYAGDVTYDIFGITDKNKDQLQKDLVELLSTTSNSFVREIFPDQPQTDSRRRPPTSGDKIIKSANELVETLSKAQPSYIRTIKPNDTKSSTIYDDQRVLHQIKYLGLKENVRIRRAGFAHRQVFEKFVERFYLLSPQCSYAGDYVWDGETLDAVKLILQDASIPTTEYEIGVTQIFIKHPETLFALENMRDKYWYNMAARIQRAWRRYLQKRIDAAIRIQNAIRGKSGVSTFRNDELRNAGDKVYGGKKERRNMSLLGLRGFYGDYLSCNESKTRGSYIKRQANITERVLFSSHGNSLHAMYGGASQRLRKTFILTPTSLWIVGHTKARNAMKYITDYRIDLGKIRSISVTNLQDDWMAVNLMDSPKPDPLINLPFKTELITRLTQLNPRIHVKVSSTIEYLRGPKKLFVVKSQYSDSAPKYHDLYRNGTILVRHGNPPDSTAENRPAFNNEDMYGNLMEAKHKTMKKKVGTKRTPQALPTSSLAASAAQAAYHPKGIRSPTSTEQKSPSKSKPITKTRKPPVSSPVRNTSKTISNSKVYSAPKASVTKRTQDTVSVSKTSVKDDVTQEKNAIIQTEEKQNYSLPENIPQSSQTDSYQAAYDFPGSGNPSELPLQKGDIIYVSKSDPSGWSLASTLDNSKEGWVPTSYIVKYNGNVTDPSAQHQDMNTMKIQEDNTTSINEPETHTNQGPSNTDLGANLASVLAARANKLRSESEEDISREEDDDDDW.

The 680-residue stretch at 36–715 (VGVSDLTLLS…TLFALENMRD (680 aa)) folds into the Myosin motor domain. 129-136 (GESGAGKT) provides a ligand contact to ATP. Serine 357 carries the phosphoserine modification. The tract at residues 404-486 (SIGILDIYGF…PGIFAAMNDA (83 aa)) is actin-binding. 2 IQ domains span residues 719–739 (YNMA…RIDA) and 740–767 (AIRI…AGDK). Positions 773 to 963 (KERRNMSLLG…TILVRHGNPP (191 aa)) constitute a TH1 domain. Disordered stretches follow at residues 988–1086 (KTMK…KTSV), 1106–1136 (YSLP…PSEL), and 1203–1252 (INEP…DDDW). The segment covering 997 to 1016 (KRTPQALPTSSLAASAAQAA) has biased composition (low complexity). Polar residues-rich tracts occupy residues 1050 to 1063 (PVRN…NSKV), 1106 to 1121 (YSLP…TDSY), and 1203 to 1219 (INEP…NTDL). The SH3 domain occupies 1116 to 1178 (SQTDSYQAAY…PTSYIVKYNG (63 aa)). Over residues 1238–1252 (SEEDISREEDDDDDW) the composition is skewed to acidic residues.

It belongs to the TRAFAC class myosin-kinesin ATPase superfamily. Myosin family. Phosphorylation of the TEDS site (Ser-357) is required for the polarization of the actin cytoskeleton. Phosphorylation probably activates the myosin-I ATPase activity.

The protein localises to the cytoplasm. It localises to the cytoskeleton. Its subcellular location is the actin patch. Type-I myosin implicated in the organization of the actin cytoskeleton. Required for proper actin cytoskeleton polarization. At the cell cortex, assembles in patch-like structures together with proteins from the actin-polymerizing machinery and promotes actin assembly. Functions as actin nucleation-promoting factor (NPF) for the Arp2/3 complex. The chain is Myosin-3 (MYO3) from Candida glabrata (strain ATCC 2001 / BCRC 20586 / JCM 3761 / NBRC 0622 / NRRL Y-65 / CBS 138) (Yeast).